Reading from the N-terminus, the 452-residue chain is Fructose-2,6-bisphosphatase (452 aa).

The segment at 1–223 is 6-phosphofructo-2-kinase; that stretch reads MGYSTISNDN…VFYVMNIRPK (223 aa). 20 to 28 contacts ATP; that stretch reads GLPARGKSF. Residues R53 and R78 each coordinate beta-D-fructose 6-phosphate. The active site involves D104. Beta-D-fructose 6-phosphate contacts are provided by T106 and R112. 143-148 provides a ligand contact to ATP; it reads NAKDIG. Beta-D-fructose 6-phosphate is bound by residues R169 and Y173. Residues 224-452 form a fructose-2,6-bisphosphatase region; that stretch reads PKYIWLSRHG…LNDSPLEDKF (229 aa). A beta-D-fructose 2,6-bisphosphate-binding site is contributed by R231. H232 serves as the catalytic Tele-phosphohistidine intermediate. Residues N238 and G244 each coordinate beta-D-fructose 2,6-bisphosphate. E302 serves as the catalytic Proton donor/acceptor. Residues Y313, R327, K331, Y342, Q368, and R372 each coordinate beta-D-fructose 2,6-bisphosphate. 324 to 327 contributes to the ATP binding site; the sequence is FKAR. Residues 368–372 and Y404 each bind ATP; that span reads QAVLR. Residues S435 and S446 each carry the phosphoserine modification.

The protein in the C-terminal section; belongs to the phosphoglycerate mutase family.

The catalysed reaction is beta-D-fructose 2,6-bisphosphate + H2O = beta-D-fructose 6-phosphate + phosphate. Inhibited by fructose 6-P, activated by glycerol 3-P. Monofunctional, high-specificity fructose-2,6-bisphosphatase, which releases phosphate from the 2-position of fructose 2,6-bisphosphate. Has no detectable 6-phosphofructo-2-kinase activity. In Saccharomyces cerevisiae (strain ATCC 204508 / S288c) (Baker's yeast), this protein is Fructose-2,6-bisphosphatase.